Here is a 360-residue protein sequence, read N- to C-terminus: Phospho-N-acetylmuramoyl-pentapeptide-transferase (360 aa).

Helical transmembrane passes span 26 to 46, 74 to 94, 97 to 117, 134 to 154, 168 to 188, 199 to 219, 236 to 256, 263 to 283, 288 to 308, and 338 to 358; these read AILG…KLIE, MGGL…GDLG, YVWV…IDDY, YILQ…TAAN, VMPQ…VGSS, GLAI…AYLS, SGEL…FLWF, VFMG…IAVL, ILLV…ILQV, and VIVR…ATLK.

The protein belongs to the glycosyltransferase 4 family. MraY subfamily. It depends on Mg(2+) as a cofactor.

Its subcellular location is the cell inner membrane. The catalysed reaction is UDP-N-acetyl-alpha-D-muramoyl-L-alanyl-gamma-D-glutamyl-meso-2,6-diaminopimeloyl-D-alanyl-D-alanine + di-trans,octa-cis-undecaprenyl phosphate = di-trans,octa-cis-undecaprenyl diphospho-N-acetyl-alpha-D-muramoyl-L-alanyl-D-glutamyl-meso-2,6-diaminopimeloyl-D-alanyl-D-alanine + UMP. The protein operates within cell wall biogenesis; peptidoglycan biosynthesis. In terms of biological role, catalyzes the initial step of the lipid cycle reactions in the biosynthesis of the cell wall peptidoglycan: transfers peptidoglycan precursor phospho-MurNAc-pentapeptide from UDP-MurNAc-pentapeptide onto the lipid carrier undecaprenyl phosphate, yielding undecaprenyl-pyrophosphoryl-MurNAc-pentapeptide, known as lipid I. This is Phospho-N-acetylmuramoyl-pentapeptide-transferase from Shewanella putrefaciens (strain CN-32 / ATCC BAA-453).